The following is a 327-amino-acid chain: Acetaldehyde dehydrogenase 6 (327 aa).

15 to 18 (SGNI) is a binding site for NAD(+). The active-site Acyl-thioester intermediate is the Cys-133. Residues 164 to 172 (SAGPGTRAN) and Asn-297 contribute to the NAD(+) site.

This sequence belongs to the acetaldehyde dehydrogenase family.

It carries out the reaction acetaldehyde + NAD(+) + CoA = acetyl-CoA + NADH + H(+). The protein is Acetaldehyde dehydrogenase 6 of Rhodococcus opacus (strain B4).